A 453-amino-acid polypeptide reads, in one-letter code: Probable glycine dehydrogenase (decarboxylating) subunit 1 (453 aa).

This sequence belongs to the GcvP family. N-terminal subunit subfamily. As to quaternary structure, the glycine cleavage system is composed of four proteins: P, T, L and H. In this organism, the P 'protein' is a heterodimer of two subunits.

The enzyme catalyses N(6)-[(R)-lipoyl]-L-lysyl-[glycine-cleavage complex H protein] + glycine + H(+) = N(6)-[(R)-S(8)-aminomethyldihydrolipoyl]-L-lysyl-[glycine-cleavage complex H protein] + CO2. Functionally, the glycine cleavage system catalyzes the degradation of glycine. The P protein binds the alpha-amino group of glycine through its pyridoxal phosphate cofactor; CO(2) is released and the remaining methylamine moiety is then transferred to the lipoamide cofactor of the H protein. The sequence is that of Probable glycine dehydrogenase (decarboxylating) subunit 1 from Dictyoglomus thermophilum (strain ATCC 35947 / DSM 3960 / H-6-12).